The chain runs to 1454 residues: Beta-1,3-glucan-binding protein (1454 aa).

The propeptide occupies 1-197 (MSFDLTTPFD…KRSLEMRMMN (197 aa)). Residues asparagine 33, asparagine 55, asparagine 185, asparagine 571, asparagine 592, asparagine 825, asparagine 882, and asparagine 1153 are each glycosylated (N-linked (GlcNAc...) asparagine).

Belongs to the glycosyl hydrolase 16 family. As to quaternary structure, monomer. In terms of tissue distribution, expressed in the hepatopancreas and secreted into the hemolymph. Expressed at lower levels in muscle, pleopod and gill tissue.

It is found in the secreted. In terms of biological role, involved in the recognition of invading microorganisms. Binds specifically to beta-1,3-glucan and activates the prophenoloxidase cascade. The polypeptide is Beta-1,3-glucan-binding protein (Penaeus vannamei (Whiteleg shrimp)).